A 143-amino-acid polypeptide reads, in one-letter code: Probable glycine cleavage system H protein (143 aa).

The 83-residue stretch at 36 to 118 (VATVGITDFA…YGEGWIFKIK (83 aa)) folds into the Lipoyl-binding domain. Position 77 is an N6-lipoyllysine (Lys77).

It belongs to the GcvH family. In terms of assembly, the glycine cleavage system is composed of four proteins: P, T, L and H. (R)-lipoate is required as a cofactor.

In terms of biological role, the glycine cleavage system catalyzes the degradation of glycine. The H protein shuttles the methylamine group of glycine from the P protein to the T protein. This chain is Probable glycine cleavage system H protein, found in Aeropyrum pernix (strain ATCC 700893 / DSM 11879 / JCM 9820 / NBRC 100138 / K1).